We begin with the raw amino-acid sequence, 287 residues long: Protease HtpX (287 aa).

2 helical membrane passes run 4 to 24 and 36 to 56; these read VMLF…VLNI and LSGL…ISLM. Residue histidine 143 participates in Zn(2+) binding. Residue glutamate 144 is part of the active site. Histidine 147 lines the Zn(2+) pocket. The next 2 helical transmembrane spans lie at 158 to 178 and 192 to 212; these read LMQG…ANIV and MVYF…ASFI. Glutamate 221 is a Zn(2+) binding site.

Belongs to the peptidase M48B family. It depends on Zn(2+) as a cofactor.

The protein resides in the cell inner membrane. The protein is Protease HtpX of Vibrio atlanticus (strain LGP32) (Vibrio splendidus (strain Mel32)).